Here is a 688-residue protein sequence, read N- to C-terminus: Translation initiation factor IF-2 (688 aa).

The interval 62 to 103 is disordered; it reads EFEVEEKVVRSKKNSNKKKKKGKGNEDKRQDNFAGRQQTQIV. Residues 71–83 show a composition bias toward basic residues; the sequence is RSKKNSNKKKKKG. Residues 190 to 359 form the tr-type G domain; sequence ERPAVVTIMG…LLVSEVEEYK (170 aa). The segment at 199 to 206 is G1; sequence GHVDHGKT. Residue 199–206 coordinates GTP; that stretch reads GHVDHGKT. Residues 224 to 228 are G2; sequence GITQH. A G3 region spans residues 245–248; it reads DTPG. Residues 245 to 249 and 299 to 302 each bind GTP; these read DTPGH and NKMD. Residues 299-302 form a G4 region; the sequence is NKMD. The G5 stretch occupies residues 335 to 337; that stretch reads SAI.

It belongs to the TRAFAC class translation factor GTPase superfamily. Classic translation factor GTPase family. IF-2 subfamily.

It localises to the cytoplasm. One of the essential components for the initiation of protein synthesis. Protects formylmethionyl-tRNA from spontaneous hydrolysis and promotes its binding to the 30S ribosomal subunits. Also involved in the hydrolysis of GTP during the formation of the 70S ribosomal complex. The protein is Translation initiation factor IF-2 of Bacillus cereus (strain G9842).